The sequence spans 188 residues: dCTP deaminase (188 aa).

DCTP contacts are provided by residues 111-116 (KSTYAR), 135-137 (TLE), glutamine 156, tyrosine 170, and glutamine 180. Glutamate 137 (proton donor/acceptor) is an active-site residue.

It belongs to the dCTP deaminase family. In terms of assembly, homotrimer.

It carries out the reaction dCTP + H2O + H(+) = dUTP + NH4(+). The protein operates within pyrimidine metabolism; dUMP biosynthesis; dUMP from dCTP (dUTP route): step 1/2. Functionally, catalyzes the deamination of dCTP to dUTP. The polypeptide is dCTP deaminase (Dichelobacter nodosus (strain VCS1703A)).